Reading from the N-terminus, the 323-residue chain is Aldo-keto reductase family 1 member C1 (323 aa).

NADP(+)-binding positions include 20–24 and Asp-50; that span reads GFGTY. Tyr-24 contacts substrate. Tyr-55 functions as the Proton donor in the catalytic mechanism. His-117 lines the substrate pocket. Residues 166–167, Gln-190, and 216–222 contribute to the NADP(+) site; these read SN and YSALGSH. His-222 and Trp-227 together coordinate substrate. 270 to 280 serves as a coordination point for NADP(+); the sequence is KSYNEQRIREN.

Belongs to the aldo/keto reductase family. As to quaternary structure, monomer. Expressed in liver, adrenal gland, intestine and kidney.

Its subcellular location is the cytoplasm. It localises to the cytosol. It carries out the reaction a 3alpha-hydroxysteroid + NADP(+) = a 3-oxosteroid + NADPH + H(+). The enzyme catalyses a 3alpha-hydroxysteroid + NAD(+) = a 3-oxosteroid + NADH + H(+). The catalysed reaction is (17R,20S)-17,20-dihydroxypregn-4-en-3-one + NADP(+) = 17alpha-hydroxyprogesterone + NADPH + H(+). It catalyses the reaction (17R,20S)-17,20-dihydroxypregn-4-en-3-one + NAD(+) = 17alpha-hydroxyprogesterone + NADH + H(+). It carries out the reaction (20S)-hydroxypregn-4-en-3-one + NADP(+) = progesterone + NADPH + H(+). The enzyme catalyses (20S)-hydroxypregn-4-en-3-one + NAD(+) = progesterone + NADH + H(+). The catalysed reaction is (1R,2R)-1,2-dihydrobenzene-1,2-diol + NADP(+) = catechol + NADPH + H(+). It catalyses the reaction (S)-indan-1-ol + NAD(+) = indan-1-one + NADH + H(+). It carries out the reaction (S)-indan-1-ol + NADP(+) = indan-1-one + NADPH + H(+). The enzyme catalyses 5alpha-androstane-3alpha,17beta-diol + NADP(+) = 17beta-hydroxy-5alpha-androstan-3-one + NADPH + H(+). The catalysed reaction is 5alpha-androstane-3beta,17beta-diol + NADP(+) = 17beta-hydroxy-5alpha-androstan-3-one + NADPH + H(+). It catalyses the reaction 5alpha-androstane-3alpha,17beta-diol + NAD(+) = 17beta-hydroxy-5alpha-androstan-3-one + NADH + H(+). It carries out the reaction 17beta-hydroxy-5alpha-androstan-3-one + NADP(+) = 5alpha-androstan-3,17-dione + NADPH + H(+). The enzyme catalyses androsterone + NADP(+) = 5alpha-androstan-3,17-dione + NADPH + H(+). The catalysed reaction is androsterone + NADPH + H(+) = 5alpha-androstane-3alpha,17beta-diol + NADP(+). It catalyses the reaction 5alpha-androstane-3alpha,17beta-diol + NAD(+) = androsterone + NADH + H(+). It carries out the reaction 17beta-estradiol + NADP(+) = estrone + NADPH + H(+). The enzyme catalyses 17beta-estradiol + NAD(+) = estrone + NADH + H(+). The catalysed reaction is testosterone + NADP(+) = androst-4-ene-3,17-dione + NADPH + H(+). It catalyses the reaction 20alpha-hydroxy-5beta-pregnan-3-one + NADP(+) = 5beta-pregnan-3,20-dione + NADPH + H(+). It carries out the reaction 3beta-hydroxy-5beta-pregnane-20-one + NADP(+) = 5beta-pregnan-3,20-dione + NADPH + H(+). The enzyme catalyses 3beta-hydroxy-5beta-pregnane-20-one + NADPH + H(+) = 3beta,20alpha-dihydroxy-5beta-pregnane + NADP(+). The catalysed reaction is (3beta,5alpha,17beta)-3-hydroxyandrostan-17-yl sulfate + NADP(+) = 5alpha-dihydrotestosterone sulfate + NADPH + H(+). The protein operates within steroid metabolism. Cytosolic aldo-keto reductase that catalyzes the NADH and NADPH-dependent reduction of ketosteroids to hydroxysteroids. Most probably acts as a reductase in vivo since the oxidase activity measured in vitro is inhibited by physiological concentrations of NADPH. Displays a broad positional specificity acting on positions 3, 17 and 20 of steroids and regulates the metabolism of hormones like estrogens and androgens. May also reduce conjugated steroids such as 5alpha-dihydrotestosterone sulfate. Displays affinity for bile acids. The chain is Aldo-keto reductase family 1 member C1 (AKR1C1) from Macaca fuscata fuscata (Japanese macaque).